Consider the following 338-residue polypeptide: MLAGCRVALPRGLRCCQRVLSWVPVVIISLVVLWSYYAYVWELCLVTVTNPAEKAAYLLIFHTVFLLFIWTYWKAIFTPPKQPTKKFLLPYAEKERYDNEERPEAQKQIVAEFARKLPVYTRTGSGATRFCDTCQMVKPDRCHHCSVCGMCVLKMDHHCPWVNNCIGYSNYKFFLLFLAYAMLYCLYIGCTVFQYFILYWTDTLSNGRAKFHVLFLLFVALMFFISLMFLFGYHCWLVSLNRTTLEAFSTPVFQSGPDKNGFHLGIRRNLEQVFGKERKLWLIPVFTSLGDGFTYPMRMACESRNPLLAAENQWEDDLTDEESQAYCETSHITVHIEK.

At 1–20 (MLAGCRVALPRGLRCCQRVL) the chain is on the cytoplasmic side. A helical transmembrane segment spans residues 21 to 41 (SWVPVVIISLVVLWSYYAYVW). The Lumenal portion of the chain corresponds to 42–56 (ELCLVTVTNPAEKAA). A helical membrane pass occupies residues 57–77 (YLLIFHTVFLLFIWTYWKAIF). Residues 78–172 (TPPKQPTKKF…NNCIGYSNYK (95 aa)) lie on the Cytoplasmic side of the membrane. A DHHC domain is found at 129 to 179 (RFCDTCQMVKPDRCHHCSVCGMCVLKMDHHCPWVNNCIGYSNYKFFLLFLA). Zn(2+) contacts are provided by Cys131, Cys134, His144, Cys145, Cys148, Cys151, and His158. Catalysis depends on Cys159, which acts as the S-palmitoyl cysteine intermediate. Position 165 (Cys165) interacts with Zn(2+). The chain crosses the membrane as a helical span at residues 173-193 (FFLLFLAYAMLYCLYIGCTVF). The Lumenal segment spans residues 194–210 (QYFILYWTDTLSNGRAK). A helical membrane pass occupies residues 211-234 (FHVLFLLFVALMFFISLMFLFGYH). The Cytoplasmic portion of the chain corresponds to 235-338 (CWLVSLNRTT…TSHITVHIEK (104 aa)).

It belongs to the DHHC palmitoyltransferase family. Post-translationally, autopalmitoylated (in vitro).

Its subcellular location is the golgi apparatus membrane. It localises to the postsynaptic density. The catalysed reaction is L-cysteinyl-[protein] + hexadecanoyl-CoA = S-hexadecanoyl-L-cysteinyl-[protein] + CoA. It catalyses the reaction L-cysteinyl-[protein] + tetradecanoyl-CoA = S-tetradecanoyl-L-cysteinyl-[protein] + CoA. It carries out the reaction L-cysteinyl-[protein] + octadecanoyl-CoA = S-octadecanoyl-L-cysteinyl-[protein] + CoA. In terms of biological role, palmitoyltransferase that catalyzes the addition of palmitate onto various protein substrates. Has no stringent fatty acid selectivity and in addition to palmitate can also transfer onto target proteins myristate from tetradecanoyl-CoA and stearate from octadecanoyl-CoA. May thereby regulate target proteins association and localization to membranes. In the nervous system, probably catalyzes the palmitoylation of synaptic proteins and is involved in the differentiation of dopaminergic neurons and the development of the diencephalon. This chain is Palmitoyltransferase ZDHHC15 (zdhhc15), found in Xenopus laevis (African clawed frog).